A 488-amino-acid chain; its full sequence is Cobyric acid synthase (488 aa).

The region spanning 252-440 (VPLIAVLRFP…VHGLFANDRQ (189 aa)) is the GATase cobBQ-type domain. The Nucleophile role is filled by Cys-334. The active site involves His-432.

It belongs to the CobB/CobQ family. CobQ subfamily.

Its pathway is cofactor biosynthesis; adenosylcobalamin biosynthesis. Its function is as follows. Catalyzes amidations at positions B, D, E, and G on adenosylcobyrinic A,C-diamide. NH(2) groups are provided by glutamine, and one molecule of ATP is hydrogenolyzed for each amidation. This chain is Cobyric acid synthase, found in Methylorubrum populi (strain ATCC BAA-705 / NCIMB 13946 / BJ001) (Methylobacterium populi).